A 460-amino-acid chain; its full sequence is Chromosomal replication initiator protein DnaA (460 aa).

A domain I, interacts with DnaA modulators region spans residues 1 to 83 (MENIWLEAQT…EFHVADEKPE (83 aa)). The span at 78–121 (ADEKPEAAPEEKPEKEGKPAREKEKDKDKEKEKDREKEKDKKEL) shows a compositional bias: basic and acidic residues. The segment at 78 to 122 (ADEKPEAAPEEKPEKEGKPAREKEKDKDKEKEKDREKEKDKKELV) is disordered. The domain II stretch occupies residues 83–123 (EAAPEEKPEKEGKPAREKEKDKDKEKEKDREKEKDKKELVP). Residues 124 to 340 (NLNPKYTFES…GMLIRLEAFA (217 aa)) form a domain III, AAA+ region region. ATP-binding residues include Gly-168, Gly-170, Lys-171, and Thr-172. The interval 341–460 (SLTGQEITLS…VEDIRKKLFT (120 aa)) is domain IV, binds dsDNA.

This sequence belongs to the DnaA family. In terms of assembly, oligomerizes as a right-handed, spiral filament on DNA at oriC.

The protein resides in the cytoplasm. In terms of biological role, plays an essential role in the initiation and regulation of chromosomal replication. ATP-DnaA binds to the origin of replication (oriC) to initiate formation of the DNA replication initiation complex once per cell cycle. Binds the DnaA box (a 9 base pair repeat at the origin) and separates the double-stranded (ds)DNA. Forms a right-handed helical filament on oriC DNA; dsDNA binds to the exterior of the filament while single-stranded (ss)DNA is stabiized in the filament's interior. The ATP-DnaA-oriC complex binds and stabilizes one strand of the AT-rich DNA unwinding element (DUE), permitting loading of DNA polymerase. After initiation quickly degrades to an ADP-DnaA complex that is not apt for DNA replication. Binds acidic phospholipids. The sequence is that of Chromosomal replication initiator protein DnaA from Geobacter sp. (strain M21).